Consider the following 473-residue polypeptide: Biotin-dependent acetyl-/propionyl-coenzyme A carboxylase beta6 subunit (473 aa).

The CoA carboxyltransferase N-terminal domain occupies 1 to 224 (MTIMAPEAVG…QGHFDRSKAE (224 aa)). Positions 225 to 473 (AGDTDIHALL…RRGRHKNIPL (249 aa)) constitute a CoA carboxyltransferase C-terminal domain.

Belongs to the AccD/PCCB family. The biotin-dependent acyl-CoA carboxylase complex is composed of AccA3, which contains the biotin carboxylase (BC) and biotin carboxyl carrier protein (BCCP) domains, and AccD6, which contains the carboxyl transferase (CT) domain.

It catalyses the reaction N(6)-carboxybiotinyl-L-lysyl-[protein] + acetyl-CoA = N(6)-biotinyl-L-lysyl-[protein] + malonyl-CoA. The enzyme catalyses N(6)-carboxybiotinyl-L-lysyl-[protein] + propanoyl-CoA = methylmalonyl-CoA + N(6)-biotinyl-L-lysyl-[protein]. Its pathway is lipid metabolism; fatty acid biosynthesis. The protein operates within lipid metabolism; mycolic acid biosynthesis. Functionally, component of a biotin-dependent acyl-CoA carboxylase complex. This subunit transfers the CO2 from carboxybiotin to the CoA ester substrate. When associated with the alpha3 subunit AccA3, is involved in the carboxylation of acetyl-CoA and propionyl-CoA. In Mycobacterium bovis (strain ATCC BAA-935 / AF2122/97), this protein is Biotin-dependent acetyl-/propionyl-coenzyme A carboxylase beta6 subunit (accD6).